The chain runs to 261 residues: Ribonuclease PH (261 aa).

Phosphate is bound by residues R86 and 124–126 (GTR).

The protein belongs to the RNase PH family. In terms of assembly, homohexameric ring arranged as a trimer of dimers.

It carries out the reaction tRNA(n+1) + phosphate = tRNA(n) + a ribonucleoside 5'-diphosphate. Its function is as follows. Phosphorolytic 3'-5' exoribonuclease that plays an important role in tRNA 3'-end maturation. Removes nucleotide residues following the 3'-CCA terminus of tRNAs; can also add nucleotides to the ends of RNA molecules by using nucleoside diphosphates as substrates, but this may not be physiologically important. Probably plays a role in initiation of 16S rRNA degradation (leading to ribosome degradation) during starvation. The chain is Ribonuclease PH from Persephonella marina (strain DSM 14350 / EX-H1).